The primary structure comprises 307 residues: DDRGK domain-containing protein 1 (307 aa).

Residues 1–2 lie on the Lumenal side of the membrane; it reads MD. A helical transmembrane segment spans residues 3-23; the sequence is LILLVGIAVALLVILATLYFL. At 24–307 the chain is on the cytoplasmic side; that stretch reads QNKNKAAGEA…PVQSAAGGDS (284 aa). Composition is skewed to low complexity over residues 32-43 and 54-83; these read EAKPAAAAPRRG and RRAQ…PAAA. The tract at residues 32–162 is disordered; that stretch reads EAKPAAAAPR…EEVEAEAERK (131 aa). Positions 117–162 are enriched in basic and acidic residues; sequence KMEAKEQKRLQREHELQEREKRKVKEAKEDAERKQQEEVEAEAERK.

Belongs to the DDRGK1 family. Interacts with Atg9; the interaction is transient.

The protein resides in the endoplasmic reticulum membrane. In terms of biological role, substrate adapter for ufmylation, the covalent attachment of the ubiquitin-like modifier UFM1 to substrate proteins. Required for ufmylation of Atg9; protects the nervous system during aging, possibly by stabilizing Atg9 and supporting its function. This chain is DDRGK domain-containing protein 1, found in Drosophila willistoni (Fruit fly).